We begin with the raw amino-acid sequence, 234 residues long: Large ribosomal subunit protein uL1 (234 aa).

The protein belongs to the universal ribosomal protein uL1 family. Part of the 50S ribosomal subunit.

Binds directly to 23S rRNA. The L1 stalk is quite mobile in the ribosome, and is involved in E site tRNA release. Functionally, protein L1 is also a translational repressor protein, it controls the translation of the L11 operon by binding to its mRNA. The protein is Large ribosomal subunit protein uL1 of Cronobacter sakazakii (strain ATCC BAA-894) (Enterobacter sakazakii).